We begin with the raw amino-acid sequence, 362 residues long: MKAIIVLLMVVTSNADRICTGITSSNSPHVVKTATQGEVNVTGVIPLTTTPTKSHFANLKGTKTRGKLCPKCLNCTDLDVALARPKCTGTIPSAKASILHEVKPVTFGCFPIMHDRTKIRQLPNLLRGYEHIRLSTHNVINAEKAPGGPYKIGTSGSCPNVTNGNGFFATMAWAVPKNDNNKTATNSLTVEVPYICTEGEDQITVWGFHSDNEIQMVKLYGDSKPQKFTSSANGVTTHYVSQIGGFPNQAEDGGLPQSGRIVVDYMVQKSGKTGTITYQRGILLPQKVWCASGRSKVIKGSLPLIGEADCLHEKYGGLNKSKPYYTGEHAKAIGNCPIWVKTPLKLANGTKYRPPAKLLKER.

Residues 1–15 (MKAIIVLLMVVTSNA) form the signal peptide. N-linked (GlcNAc...) asparagine; by host glycans are attached at residues asparagine 40, asparagine 74, asparagine 160, asparagine 181, asparagine 319, and asparagine 348.

The protein belongs to the influenza viruses hemagglutinin family. As to quaternary structure, homotrimer of disulfide-linked HA1-HA2. Post-translationally, in natural infection, inactive HA is matured into HA1 and HA2 outside the cell by one or more trypsin-like, arginine-specific endoprotease secreted by the bronchial epithelial cells. One identified protease that may be involved in this process is secreted in lungs by club cells. Palmitoylated.

The protein localises to the virion membrane. Its subcellular location is the host apical cell membrane. Its function is as follows. Binds to sialic acid-containing receptors on the cell surface, bringing about the attachment of the virus particle to the cell. Plays a major role in the determination of host range restriction and virulence. Class I viral fusion protein. Responsible for penetration of the virus into the cell cytoplasm by mediating the fusion of the membrane of the endocytosed virus particle with the endosomal membrane. Low pH in endosomes induce an irreversible conformational change in HA2, releasing the fusion hydrophobic peptide. Several trimers are required to form a competent fusion pore. This chain is Hemagglutinin (HA), found in Homo sapiens (Human).